The chain runs to 232 residues: Phosphatidylserine decarboxylase proenzyme (232 aa).

Catalysis depends on Ser-190, which acts as the Schiff-base intermediate with substrate; via pyruvic acid. Ser-190 bears the Pyruvic acid (Ser); by autocatalysis mark.

It belongs to the phosphatidylserine decarboxylase family. PSD-A subfamily. In terms of assembly, heterodimer of a large membrane-associated beta subunit and a small pyruvoyl-containing alpha subunit. It depends on pyruvate as a cofactor. Is synthesized initially as an inactive proenzyme. Formation of the active enzyme involves a self-maturation process in which the active site pyruvoyl group is generated from an internal serine residue via an autocatalytic post-translational modification. Two non-identical subunits are generated from the proenzyme in this reaction, and the pyruvate is formed at the N-terminus of the alpha chain, which is derived from the carboxyl end of the proenzyme. The post-translation cleavage follows an unusual pathway, termed non-hydrolytic serinolysis, in which the side chain hydroxyl group of the serine supplies its oxygen atom to form the C-terminus of the beta chain, while the remainder of the serine residue undergoes an oxidative deamination to produce ammonia and the pyruvoyl prosthetic group on the alpha chain.

The protein localises to the cell membrane. The catalysed reaction is a 1,2-diacyl-sn-glycero-3-phospho-L-serine + H(+) = a 1,2-diacyl-sn-glycero-3-phosphoethanolamine + CO2. The protein operates within phospholipid metabolism; phosphatidylethanolamine biosynthesis; phosphatidylethanolamine from CDP-diacylglycerol: step 2/2. In terms of biological role, catalyzes the formation of phosphatidylethanolamine (PtdEtn) from phosphatidylserine (PtdSer). The chain is Phosphatidylserine decarboxylase proenzyme from Bradyrhizobium sp. (strain ORS 278).